A 315-amino-acid polypeptide reads, in one-letter code: Ribosomal protein L11 methyltransferase (315 aa).

Threonine 164, glycine 185, aspartate 207, and asparagine 250 together coordinate S-adenosyl-L-methionine.

The protein belongs to the methyltransferase superfamily. PrmA family.

Its subcellular location is the cytoplasm. It carries out the reaction L-lysyl-[protein] + 3 S-adenosyl-L-methionine = N(6),N(6),N(6)-trimethyl-L-lysyl-[protein] + 3 S-adenosyl-L-homocysteine + 3 H(+). Functionally, methylates ribosomal protein L11. In Exiguobacterium sibiricum (strain DSM 17290 / CCUG 55495 / CIP 109462 / JCM 13490 / 255-15), this protein is Ribosomal protein L11 methyltransferase.